A 760-amino-acid polypeptide reads, in one-letter code: Cellulose synthase-like protein G1 (760 aa).

Transmembrane regions (helical) follow at residues 28 to 48 (IYAI…VHSL) and 54 to 74 (TLIT…WATT). Residues Asp142 and Asp447 contribute to the active site. 5 helical membrane passes run 530–550 (IPLT…VSVF), 558–578 (FWLY…DFLL), 593–613 (LMIK…LKTL), 656–676 (VAIV…FCGG), and 680–700 (LELM…GAMV).

This sequence belongs to the glycosyltransferase 2 family. Plant cellulose synthase-like G subfamily. Expressed in young seedlings, primarily in the vascular tissue.

It is found in the golgi apparatus membrane. Thought to be a Golgi-localized beta-glycan synthase that polymerize the backbones of noncellulosic polysaccharides (hemicelluloses) of plant cell wall. This is Cellulose synthase-like protein G1 (CSLG1) from Arabidopsis thaliana (Mouse-ear cress).